The chain runs to 290 residues: Small ribosomal subunit biogenesis GTPase RsgA (290 aa).

Residues Lys-62 to Leu-213 form the CP-type G domain. GTP is bound by residues Ser-111–Asp-114 and Gly-156–Thr-164. Zn(2+) is bound by residues Cys-237, Cys-242, His-244, and Cys-250.

Belongs to the TRAFAC class YlqF/YawG GTPase family. RsgA subfamily. Monomer. Associates with 30S ribosomal subunit, binds 16S rRNA. It depends on Zn(2+) as a cofactor.

Its subcellular location is the cytoplasm. Its function is as follows. One of several proteins that assist in the late maturation steps of the functional core of the 30S ribosomal subunit. Helps release RbfA from mature subunits. May play a role in the assembly of ribosomal proteins into the subunit. Circularly permuted GTPase that catalyzes slow GTP hydrolysis, GTPase activity is stimulated by the 30S ribosomal subunit. This Streptococcus agalactiae serotype III (strain NEM316) protein is Small ribosomal subunit biogenesis GTPase RsgA.